The following is a 160-amino-acid chain: uncharacterized protein (160 aa).

Topologically, residues 1–33 are extracellular; the sequence is MPLRPCRHHQGFLPKKQWRAKFPQLIVLMGRVA. The chain crosses the membrane as a helical span at residues 34–54; the sequence is AEELLPAVAVAAVVVAVVVAV. At 55–68 the chain is on the cytoplasmic side; the sequence is ERVVPLLFVHRPDS. Residues 69–89 form a helical membrane-spanning segment; the sequence is FFLIFFFQSCFVCCCCCCSCS. Topologically, residues 90–119 are extracellular; sequence TSLKAYSSEKEKQKYGKRGNGNTPLVQRLV. A helical transmembrane segment spans residues 120–140; that stretch reads TLSYLALLILVLSIELLTWFV. The Cytoplasmic segment spans residues 141–160; that stretch reads KKQRTGNKKQKDKEKNALLL.

Its subcellular location is the membrane. This is an uncharacterized protein from Saccharomyces cerevisiae (strain ATCC 204508 / S288c) (Baker's yeast).